Here is a 205-residue protein sequence, read N- to C-terminus: Retron Vc95 putative HNH endonuclease (205 aa).

Putative HNH endonuclease component of antiviral defense system retron Vc95, composed of a non-coding RNA (ncRNA), a reverse transcriptase (RT), a probable ATP-binding protein and this protein. Expression of retron Vc95 confers protection against bacteriophages T2, T4 and T6. At multiplicity of infection (MOI) of 0.02 cultures slow growth when infected with T4 but do not collapse, at MOI 2 cultures enter growth stasis. In Vibrio cholerae serotype O1 biovar El Tor, this protein is Retron Vc95 putative HNH endonuclease.